The chain runs to 1055 residues: Bifunctional fucokinase/GDP-fucose pyrophosphorylase (1055 aa).

The GDP-fucose pyrophosphorylase stretch occupies residues 34–565 (WDAIVLTAAS…SSQRVSLEEL (532 aa)). An L-fucokinase region spans residues 693–1055 (GKSHSENHIS…VKVYNWSICI (363 aa)). 826 to 836 (PRGSGLGTSSI) provides a ligand contact to ATP.

This sequence belongs to the GHMP kinase family. It depends on Mn(2+) as a cofactor. Requires Mg(2+) as cofactor. Ubiquitous. Highest expression in flower buds.

The enzyme catalyses L-fucose + ATP = beta-L-fucose 1-phosphate + ADP + H(+). It carries out the reaction beta-L-fucose 1-phosphate + GTP + H(+) = GDP-beta-L-fucose + diphosphate. Its function is as follows. Bifunctional enzyme involved in the salvage pathway which converts free L-fucose to GDP-L-fucose. Catalyzes two successive reactions, the ATP-dependent phosphorylation of L-fucose to L-fucose 1-phosphate, and its guanylylation to GDP-L-fucose. The sugar-1-kinase activity has a strict substrate specificity for L-fucose and ATP. The pyrophosphorylase activity has a strict substrate specificity for L-fucose 1-phosphate and GTP. The sequence is that of Bifunctional fucokinase/GDP-fucose pyrophosphorylase (FKGP) from Arabidopsis thaliana (Mouse-ear cress).